The sequence spans 186 residues: Putative manganese efflux pump MntP (186 aa).

6 helical membrane passes run 1-21 (MSFLTNFLLGLGLAMDAFAVS), 41-61 (VFFGGFQALMPVLGWVGGSAV), 62-82 (SGFVSDYAPWIAFGLLAFIGG), 105-127 (LFLLAVATSIDALAVGISFAFLG), 139-159 (CVTFVMSFCGAVLGYRIGHFF), and 163-183 (VEILGGLILIGLGVKILAEHM).

This sequence belongs to the MntP (TC 9.B.29) family.

It localises to the cell membrane. Probably functions as a manganese efflux pump. The sequence is that of Putative manganese efflux pump MntP from Methanosarcina mazei (strain ATCC BAA-159 / DSM 3647 / Goe1 / Go1 / JCM 11833 / OCM 88) (Methanosarcina frisia).